We begin with the raw amino-acid sequence, 368 residues long: Biglycan (368 aa).

A signal peptide spans 1–16 (MWPLWRLVSLLALSQA). A propeptide spanning residues 17–37 (LPFEQRGFWDFTLDDGPFMMN) is cleaved from the precursor. Residues Ser42 and Ser47 are each glycosylated (O-linked (Xyl...) (glycosaminoglycan) serine). 2 disulfide bridges follow: Cys63–Cys69 and Cys67–Cys76. LRR repeat units lie at residues 82–102 (KSVP…NNDI), 103–126 (SELR…NNKI), 127–150 (SKIH…KNHL), 151–171 (VEIP…DNRI), 172–195 (RKVP…GNPL), 196–220 (ENSG…EAKL), 221–241 (TGIP…HNKI), 242–265 (QAIE…HNQI), 266–289 (RMIE…NNKL), 290–312 (ARVP…SNNI), 313–342 (TKVG…NNPV), and 343–368 (PYWE…NYKK). 2 O-linked (Xyl...) (glycosaminoglycan) serine glycosylation sites follow: Ser180 and Ser198. N-linked (GlcNAc...) asparagine glycans are attached at residues Asn270 and Asn311. A disulfide bridge links Cys321 with Cys354.

It belongs to the small leucine-rich proteoglycan (SLRP) family. SLRP class I subfamily. As to quaternary structure, homodimer. Forms a ternary complex with MFAP2 and ELN. The two attached glycosaminoglycan chains can be either chondroitin sulfate or dermatan sulfate. Detected in placenta (at protein level). Found in several connective tissues, especially in articular cartilages.

It is found in the secreted. It localises to the extracellular space. Its subcellular location is the extracellular matrix. In terms of biological role, may be involved in collagen fiber assembly. In Homo sapiens (Human), this protein is Biglycan (BGN).